The sequence spans 1159 residues: MSMGRSSSTTFRNRTASHGSRSLGSAETARIPRKLSSQLSHTHANILHPQLQTMMEQWQMRERPSLETENGKGSLLLSSEGVADMIVLSSFGEVISVVFPWFLANVRTSFDIKLSEFKHQLFEQIGPMKWGKHSTQPQDYAFRQLNNFGEIEVIFNDDQQLSCLELHGTFPMLFLFEPDGFNRDKELMCDISHCLGYSLDKLEESIDEELRQFRASLWTQTKKTCFERGVDGVDHYAFPEEQYFCVGEKCPTDLESKVKAAKLDYQLFWTKRKSEANEVWEKMYKITIDFDPEFNPQSLMRMFVKELQCMNLFDPEDPPDEEWILQLAGRTSFVTRPEISLVSYDGIRSELESYRCPGFVVRRKSLVLKDYVRPKPLYEPHYVRVHERKMALDVLSVSIGTEVKHSGNSDKVWTDFRPTASLEQITLWDLDSNLMIRPVNVTGLPFTASHDIYLGMEFKVYVGTLTLATIKIPRVPTTKLVWKREFFTFDLYMKDMPPSAILSVRVYSMKTTKMKEEIELGWVNISLSDWRDELRQGQIKLNLWGPEPSANRSRIGHNGAKIGTSLSVTVEISSHGRRVKMPNEAQYKYLVDHRISWSDTVEIVGDDYEACIGDPGYKKLQDLVKKHESGVILDDSEQRHVWSWRNYIQKQEPDLLVVLSELRIVWTDRENFSELYVMLETWKAPSVAAALTLLGKRCTDRVIRKFAVNKLNDQLSQFNVHLFLLPLIQALKYEPRAYSEVGMMLLTRALSSYRIGHRLFWLLRSEICRLKDCATNNEEYRRISLLMEAYLRGNEEHIKGIIRQVDMVDELTRISSLVKGLSKEAAREKLRDQLRTISHKMESIDSPLDPVYKFGEMVIEKAIVLGSAKQPLRLVWKNKNPKSDLHLPFCEVIFKNGDDLRQDMLVLQVLEVMDTIWKAANIDCCLSPYGVLPMGEMIGIIEVVPNCKTIFEIQHKAGLVNTAARSVDSNFMNKWIRKQCGFVDEKKKYKKGGGPTVDSAQATKKYFESVDRFLYSCVGYSVATYIMGIKDRHSDNLMLTEDGKYFHIDFGHILGHGKTKLGIQRDRQPFILTEQFLTIIRSGKPVDGNSHEIQKFKTLCLEAYEVMWNNLKYKFQKTLCCKGETKEKARKFFAGVYEEAFNGSWSTKTNWLFHAMKHY.

Positions 1-25 (MSMGRSSSTTFRNRTASHGSRSLGS) are enriched in polar residues. The disordered stretch occupies residues 1 to 28 (MSMGRSSSTTFRNRTASHGSRSLGSAET). A PI3K-ABD domain is found at 79 to 179 (SEGVADMIVL…FPMLFLFEPD (101 aa)). Residues 272–363 (RKSEANEVWE…YRCPGFVVRR (92 aa)) form the PI3K-RBD domain. Positions 430–588 (LDSNLMIRPV…VKMPNEAQYK (159 aa)) constitute a C2 PI3K-type domain. Residues 607–793 (DYEACIGDPG…SLLMEAYLRG (187 aa)) form the PIK helical domain. The PI3K/PI4K catalytic domain maps to 858–1159 (VIEKAIVLGS…NWLFHAMKHY (302 aa)). The tract at residues 864–870 (VLGSAKQ) is G-loop. Residues 1028–1036 (GIKDRHSDN) form a catalytic loop region. An activation loop region spans residues 1047 to 1073 (HIDFGHILGHGKTKLGIQRDRQPFILT).

Belongs to the PI3/PI4-kinase family.

It catalyses the reaction a 1,2-diacyl-sn-glycero-3-phospho-(1D-myo-inositol) + ATP = a 1,2-diacyl-sn-glycero-3-phospho-(1D-myo-inositol-3-phosphate) + ADP + H(+). Functionally, phosphatidylinositol 3-kinase homolog that regulates longevity and diapause. Promotes cell survival during embryonic development by recruiting akt-1/2 to the plasma membrane through the production of PtdIns(3,4,5)P3. Could function in the development or neuroendocrine signaling of the dauer pathway. Mediates susceptibility to enteropathogenic E.coli infection. May negatively regulate AYI interneuron neurite outgrowth. Plays a role in aversive olfactory learning when an odor is associated with food deprivation. Regulates this process by promoting the nuclear relocalization of egl-4 in AWC olfactory neurons after odor conditioning. The chain is Phosphatidylinositol 3-kinase age-1 (age-1) from Caenorhabditis briggsae.